The primary structure comprises 128 residues: Lysozyme C-1 (128 aa).

Positions 1–128 constitute a C-type lysozyme domain; sequence KVYDRCEFAR…VSQYIRGCKL (128 aa). 4 cysteine pairs are disulfide-bonded: cysteine 6–cysteine 126, cysteine 30–cysteine 114, cysteine 63–cysteine 79, and cysteine 75–cysteine 93. Residues glutamate 35 and aspartate 51 contribute to the active site.

This sequence belongs to the glycosyl hydrolase 22 family. In terms of assembly, monomer.

It is found in the secreted. The catalysed reaction is Hydrolysis of (1-&gt;4)-beta-linkages between N-acetylmuramic acid and N-acetyl-D-glucosamine residues in a peptidoglycan and between N-acetyl-D-glucosamine residues in chitodextrins.. Functionally, lysozymes have primarily a bacteriolytic function; those in tissues and body fluids are associated with the monocyte-macrophage system and enhance the activity of immunoagents. The chain is Lysozyme C-1 from Sus scrofa (Pig).